A 189-amino-acid polypeptide reads, in one-letter code: Endoribonuclease YbeY (189 aa).

Zn(2+) contacts are provided by His-146, His-150, and His-156.

It belongs to the endoribonuclease YbeY family. Requires Zn(2+) as cofactor.

It is found in the cytoplasm. Single strand-specific metallo-endoribonuclease involved in late-stage 70S ribosome quality control and in maturation of the 3' terminus of the 16S rRNA. This Prochlorococcus marinus (strain MIT 9211) protein is Endoribonuclease YbeY.